Consider the following 418-residue polypeptide: MTIFEELKARGLIFQTTDEEALVKAFEEGPVSFYTGYDPTADSLHLGHLVAILTSRRLQLAGHKPYALVGGATGLIGDPSFKDAERSLQTKETVEGWVEKIQGQLSRFLDFENGDNKAVMVNNYDWFGSVSFIDFLRDVGKYFTVNYMMSKESVKKRIETGISYTEFAYQIMQGYDFYELNAKYGVTLQIGGSDQWGNMTAGTELLRRKADKSGHVITVPLITDSTGKKFGKSEGNAVWLDATKTTPYEMYQFWLNVMDDDAVRFLKIFTFLSLEEIEEIGKEFDQARHQRLAQKVLAREVVTLVHGKEAYEQAVHITEQLFAGNLKALSARDLKVALNGVPTYEISADENLNIVELLVNAKISPSKRQAREDVQNGAIYINGERVQDLDYTLSDTDKIDNEITVIRRGKKKNFVLTY.

L-tyrosine is bound at residue tyrosine 34. The short motif at 39–48 is the 'HIGH' region element; that stretch reads PTADSLHLGH. Residues tyrosine 169 and glutamine 173 each contribute to the L-tyrosine site. A 'KMSKS' region motif is present at residues 229–233; the sequence is KFGKS. Residue lysine 232 participates in ATP binding. The S4 RNA-binding domain maps to 352-418; sequence LNIVELLVNA…GKKKNFVLTY (67 aa).

It belongs to the class-I aminoacyl-tRNA synthetase family. TyrS type 1 subfamily. As to quaternary structure, homodimer.

Its subcellular location is the cytoplasm. It catalyses the reaction tRNA(Tyr) + L-tyrosine + ATP = L-tyrosyl-tRNA(Tyr) + AMP + diphosphate + H(+). Catalyzes the attachment of tyrosine to tRNA(Tyr) in a two-step reaction: tyrosine is first activated by ATP to form Tyr-AMP and then transferred to the acceptor end of tRNA(Tyr). The sequence is that of Tyrosine--tRNA ligase 1 from Streptococcus thermophilus (strain CNRZ 1066).